A 98-amino-acid polypeptide reads, in one-letter code: NADH-ubiquinone oxidoreductase chain 4L (98 aa).

Transmembrane regions (helical) follow at residues 1–21, 26–46, and 61–81; these read MPSI…GTLI, LMSS…LTSL, and IILL…LVMV.

Belongs to the complex I subunit 4L family. As to quaternary structure, core subunit of respiratory chain NADH dehydrogenase (Complex I) which is composed of 45 different subunits.

It is found in the mitochondrion inner membrane. It carries out the reaction a ubiquinone + NADH + 5 H(+)(in) = a ubiquinol + NAD(+) + 4 H(+)(out). Functionally, core subunit of the mitochondrial membrane respiratory chain NADH dehydrogenase (Complex I) which catalyzes electron transfer from NADH through the respiratory chain, using ubiquinone as an electron acceptor. Part of the enzyme membrane arm which is embedded in the lipid bilayer and involved in proton translocation. The chain is NADH-ubiquinone oxidoreductase chain 4L (MT-ND4L) from Otolemur crassicaudatus (Brown greater galago).